The primary structure comprises 241 residues: DNA repair protein RecO (241 aa).

The protein belongs to the RecO family.

Its function is as follows. Involved in DNA repair and RecF pathway recombination. The protein is DNA repair protein RecO of Dinoroseobacter shibae (strain DSM 16493 / NCIMB 14021 / DFL 12).